Here is a 353-residue protein sequence, read N- to C-terminus: Heat-inducible transcription repressor HrcA (353 aa).

The protein belongs to the HrcA family.

In terms of biological role, negative regulator of class I heat shock genes (grpE-dnaK-dnaJ and groELS operons). Prevents heat-shock induction of these operons. This Anaeromyxobacter dehalogenans (strain 2CP-1 / ATCC BAA-258) protein is Heat-inducible transcription repressor HrcA.